The primary structure comprises 407 residues: Imidazolonepropionase (407 aa).

2 residues coordinate Fe(3+): H74 and H76. Zn(2+) contacts are provided by H74 and H76. Residues R83, Y146, and H179 each contribute to the 4-imidazolone-5-propanoate site. Y146 lines the N-formimidoyl-L-glutamate pocket. H244 is a Fe(3+) binding site. H244 contributes to the Zn(2+) binding site. Position 247 (Q247) interacts with 4-imidazolone-5-propanoate. A Fe(3+)-binding site is contributed by D319. Zn(2+) is bound at residue D319. N-formimidoyl-L-glutamate contacts are provided by N321 and G323. T324 is a binding site for 4-imidazolone-5-propanoate.

This sequence belongs to the metallo-dependent hydrolases superfamily. HutI family. Zn(2+) is required as a cofactor. Fe(3+) serves as cofactor.

The protein resides in the cytoplasm. It catalyses the reaction 4-imidazolone-5-propanoate + H2O = N-formimidoyl-L-glutamate. It participates in amino-acid degradation; L-histidine degradation into L-glutamate; N-formimidoyl-L-glutamate from L-histidine: step 3/3. In terms of biological role, catalyzes the hydrolytic cleavage of the carbon-nitrogen bond in imidazolone-5-propanoate to yield N-formimidoyl-L-glutamate. It is the third step in the universal histidine degradation pathway. This is Imidazolonepropionase from Salmonella typhi.